Here is an 888-residue protein sequence, read N- to C-terminus: Probable disease resistance protein At5g63020 (888 aa).

A coiled-coil region spans residues 22-66 (LNRNGDYIHGLEENLTALQRALEQIEQRREDLLRKILSEERRGLQ). Positions 139–442 (AERVDAARVE…GEGFIDRNKG (304 aa)) constitute an NB-ARC domain. Residue 181-188 (GMGGVGKT) participates in ATP binding. LRR repeat units follow at residues 512–533 (VARRVSLMFNNIESIRDAPESP), 534–555 (QLITLLLRKNFLGHISSSFFRL), 558–580 (MLVVLDLSMNRDLRHLPNEISEC), 582–604 (SLQYLSLSRTRIRIWPAGLVELR), and 605–627 (KLLYLNLEYTRMVESICGISGLT).

The protein belongs to the disease resistance NB-LRR family.

Probable disease resistance protein. This chain is Probable disease resistance protein At5g63020, found in Arabidopsis thaliana (Mouse-ear cress).